We begin with the raw amino-acid sequence, 245 residues long: UDP-2,3-diacylglucosamine hydrolase (245 aa).

Mn(2+)-binding residues include Asp8, His10, Asp41, Asn79, and His114. 79-80 contributes to the substrate binding site; that stretch reads NR. Asp122, Ser160, Lys164, Lys167, and His195 together coordinate substrate. Mn(2+) contacts are provided by His195 and His197.

Belongs to the LpxH family. The cofactor is Mn(2+).

The protein localises to the cell inner membrane. It carries out the reaction UDP-2-N,3-O-bis[(3R)-3-hydroxytetradecanoyl]-alpha-D-glucosamine + H2O = 2-N,3-O-bis[(3R)-3-hydroxytetradecanoyl]-alpha-D-glucosaminyl 1-phosphate + UMP + 2 H(+). Its pathway is glycolipid biosynthesis; lipid IV(A) biosynthesis; lipid IV(A) from (3R)-3-hydroxytetradecanoyl-[acyl-carrier-protein] and UDP-N-acetyl-alpha-D-glucosamine: step 4/6. Hydrolyzes the pyrophosphate bond of UDP-2,3-diacylglucosamine to yield 2,3-diacylglucosamine 1-phosphate (lipid X) and UMP by catalyzing the attack of water at the alpha-P atom. Involved in the biosynthesis of lipid A, a phosphorylated glycolipid that anchors the lipopolysaccharide to the outer membrane of the cell. In Aromatoleum aromaticum (strain DSM 19018 / LMG 30748 / EbN1) (Azoarcus sp. (strain EbN1)), this protein is UDP-2,3-diacylglucosamine hydrolase.